The chain runs to 676 residues: MGRRKIEIQRISDDRNRAVTFIKRKAGLFKKAHELSVLCQVDIAVIILGSNNTFYEFSSVDTNDLIYHYQNDKNLLHEVKDPSDYGDFHKSASVNINQDLLRSSMSNKPSKSNVKGMNQSENDDDENNDEDDDDHGNFERNSNMHSNKKASDKNIPSAHMKLLSPTALISKMDGSEQNKRHPENALPPLQHLKRLKPDPLQISRTPQQQQQQNISRPYHSSMYNLNQPSSSSSSPSTMDFPKLPSFQNSSFNGRPPPISISPNKFSKPFTNASSRTPKQEHKINNSGSNNNDNSNYTQSPSNSLEDSIQQTVKARRKLSARPVLRVRIPNNNFSSNSAIPSEPSSASSTSANGNSMGSSQIMKENKTSRSSKISPLSASASGPLTLQKGNNGRMVIKLPNANAPNGSNNGNGSNNNNHPYPFGSGSSPLFSATQPYIATPLQPSNIPGGPFQQNTSFLAQRQTQQYQQMSFKKQSQTVPLTTTLTGRPPSTFSGPETSNGPPTGSLPSKFVHDLMSNSPNVSSISMFPDWSMGPNSAKPGNTNNPGTFPPVQTAVNNGNSSNISSTNNTNNNNNNNNNNSSNNNSNNGNDNNSNNSNNSYYSNNEDAPVNGAAISEHTTDGDSNNQSNSSTYDAAATAYNGNTGLTPYINTAQTPLGTKFFNFSTDISGEKNSSKI.

One can recognise an MADS-box domain in the interval Arg3–Phe57. The segment at residues Ser58–Asp87 is a DNA-binding region (mef2-type). The span at Ser103–Ser120 shows a compositional bias: polar residues. A disordered region spans residues Ser103–Pro156. At Ser120 the chain carries Phosphoserine. Residues Glu121–Asp134 are compositionally biased toward acidic residues. Ser164 is subject to Phosphoserine. Residues Asp173–Glu183 show a composition bias toward basic and acidic residues. Disordered regions lie at residues Asp173 to Leu192, Ile202 to Leu318, Asn330 to Ser424, Lys472 to Leu514, and Met532 to Thr631. Residues Ile260–Thr276 are compositionally biased toward polar residues. Residues Asn284–Asn295 are compositionally biased toward low complexity. A compositionally biased stretch (polar residues) spans Tyr296 to Val312. Composition is skewed to low complexity over residues Ser334–Ser359, Ser368–Ser381, and Pro399–Asn417. Phosphoserine is present on residues Ser374 and Ser377. Over residues Lys472–Leu506 the composition is skewed to polar residues. The segment covering Pro539–Asn604 has biased composition (low complexity). A compositionally biased stretch (polar residues) spans Gly621–Thr631.

Belongs to the MEF2 family. As to quaternary structure, can heterodimerize with SPM1. Interacts with KDX1 and SLT2. Post-translationally, phosphorylated by SLT2.

Its subcellular location is the nucleus. In terms of biological role, may function as a transcription factor downstream of MPK1 that is subject to activation by the MPK1 mitogen-activated protein kinase pathway. Binds to the DNA sequence 5'-CTA[TA](4)TAG-3'. At least some RML1 target genes are involved in cell wall biosynthesis. This chain is Transcription factor RLM1 (RLM1), found in Saccharomyces cerevisiae (strain ATCC 204508 / S288c) (Baker's yeast).